We begin with the raw amino-acid sequence, 44 residues long: Photosystem I reaction center subunit IX (44 aa).

A helical transmembrane segment spans residues 7–27 (YLSVAPVLTTLWFGSLAGLLI).

Belongs to the PsaJ family.

It localises to the plastid. The protein localises to the chloroplast thylakoid membrane. Its function is as follows. May help in the organization of the PsaE and PsaF subunits. The sequence is that of Photosystem I reaction center subunit IX from Nymphaea alba (White water-lily).